A 346-amino-acid chain; its full sequence is MIIYKQGITFLQKENNNTIHLNTMFFLSPAETHQRMAAENHSFVTKFILVGLTEKSELQLPLFLVFLGIYVVTVLGNLGMITLIGLSSHLHTPMYCFLSSLSFIDFCHSTVITPKMLVNFVTEKNIISYPECMTQLYFFLVFAIAECHMLAAMAYDGYVAICSPLLYSIIISNKACFSLILVVYVIGLICASAHIGCMFRVQFCKFDVINHYFCDLISILKLSCSSTYINELLILIFSGINILVPSLTILSSYIFIIASILRIRYTEGRSKAFSTCSSHISAVSVFFGSAAFMYLQPSSVSSMDQGKVSSVFYTIVVPMLNPLIYSLRNKDVHVALKKTLGKRTFL.

The Extracellular portion of the chain corresponds to 1 to 60; sequence MIIYKQGITFLQKENNNTIHLNTMFFLSPAETHQRMAAENHSFVTKFILVGLTEKSELQL. N-linked (GlcNAc...) asparagine glycans are attached at residues asparagine 16 and asparagine 40. A helical transmembrane segment spans residues 61–81; the sequence is PLFLVFLGIYVVTVLGNLGMI. Residues 82–89 are Cytoplasmic-facing; the sequence is TLIGLSSH. Residues 90 to 110 form a helical membrane-spanning segment; that stretch reads LHTPMYCFLSSLSFIDFCHST. Topologically, residues 111-134 are extracellular; it reads VITPKMLVNFVTEKNIISYPECMT. An intrachain disulfide couples cysteine 132 to cysteine 214. The helical transmembrane segment at 135–155 threads the bilayer; that stretch reads QLYFFLVFAIAECHMLAAMAY. Residues 156-174 are Cytoplasmic-facing; it reads DGYVAICSPLLYSIIISNK. Residues 175-195 form a helical membrane-spanning segment; it reads ACFSLILVVYVIGLICASAHI. Over 196 to 232 the chain is Extracellular; that stretch reads GCMFRVQFCKFDVINHYFCDLISILKLSCSSTYINEL. The chain crosses the membrane as a helical span at residues 233-252; the sequence is LILIFSGINILVPSLTILSS. Residues 253-272 lie on the Cytoplasmic side of the membrane; sequence YIFIIASILRIRYTEGRSKA. A helical membrane pass occupies residues 273-293; it reads FSTCSSHISAVSVFFGSAAFM. Topologically, residues 294-306 are extracellular; the sequence is YLQPSSVSSMDQG. The chain crosses the membrane as a helical span at residues 307–327; the sequence is KVSSVFYTIVVPMLNPLIYSL. At 328–346 the chain is on the cytoplasmic side; the sequence is RNKDVHVALKKTLGKRTFL.

The protein belongs to the G-protein coupled receptor 1 family.

It localises to the cell membrane. Odorant receptor. This Homo sapiens (Human) protein is Olfactory receptor 8G5 (OR8G5).